The primary structure comprises 264 residues: 3-methyl-2-oxobutanoate hydroxymethyltransferase (264 aa).

Positions 44 and 83 each coordinate Mg(2+). 3-methyl-2-oxobutanoate is bound by residues 44–45, D83, and K112; that span reads DS. E114 contributes to the Mg(2+) binding site. The active-site Proton acceptor is E181.

It belongs to the PanB family. In terms of assembly, homodecamer; pentamer of dimers. It depends on Mg(2+) as a cofactor.

It localises to the cytoplasm. The enzyme catalyses 3-methyl-2-oxobutanoate + (6R)-5,10-methylene-5,6,7,8-tetrahydrofolate + H2O = 2-dehydropantoate + (6S)-5,6,7,8-tetrahydrofolate. Its pathway is cofactor biosynthesis; coenzyme A biosynthesis. Catalyzes the reversible reaction in which hydroxymethyl group from 5,10-methylenetetrahydrofolate is transferred onto alpha-ketoisovalerate to form ketopantoate. This is 3-methyl-2-oxobutanoate hydroxymethyltransferase from Pyrobaculum arsenaticum (strain DSM 13514 / JCM 11321 / PZ6).